The sequence spans 103 residues: Large ribosomal subunit protein uL24 (103 aa).

Belongs to the universal ribosomal protein uL24 family. As to quaternary structure, part of the 50S ribosomal subunit.

In terms of biological role, one of two assembly initiator proteins, it binds directly to the 5'-end of the 23S rRNA, where it nucleates assembly of the 50S subunit. Its function is as follows. One of the proteins that surrounds the polypeptide exit tunnel on the outside of the subunit. The sequence is that of Large ribosomal subunit protein uL24 from Glaesserella parasuis serovar 5 (strain SH0165) (Haemophilus parasuis).